Reading from the N-terminus, the 214-residue chain is Large ribosomal subunit protein uL1 (214 aa).

It belongs to the universal ribosomal protein uL1 family. Component of the large ribosomal subunit.

It localises to the cytoplasm. Its function is as follows. Component of the large ribosomal subunit. The ribosome is a large ribonucleoprotein complex responsible for the synthesis of proteins in the cell. The sequence is that of Large ribosomal subunit protein uL1 (RPL10A) from Entamoeba histolytica (strain ATCC 30459 / HM-1:IMSS / ABRM).